The sequence spans 307 residues: Acetaldehyde dehydrogenase 1 (307 aa).

Catalysis depends on C132, which acts as the Acyl-thioester intermediate. NAD(+) is bound by residues 163–171 (SVGPGTRKN) and N274.

It belongs to the acetaldehyde dehydrogenase family.

The catalysed reaction is acetaldehyde + NAD(+) + CoA = acetyl-CoA + NADH + H(+). The sequence is that of Acetaldehyde dehydrogenase 1 (tesF) from Comamonas testosteroni (Pseudomonas testosteroni).